The chain runs to 209 residues: Type III pantothenate kinase (209 aa).

Residue 5 to 12 (DIGNSNAN) coordinates ATP. Substrate-binding positions include tyrosine 68 and 72 to 75 (GIDR). The active-site Proton acceptor is aspartate 74. Aspartate 89 serves as a coordination point for K(+). Serine 92 contributes to the ATP binding site. Position 144 (threonine 144) interacts with substrate.

The protein belongs to the type III pantothenate kinase family. Homodimer. NH4(+) is required as a cofactor. The cofactor is K(+).

It is found in the cytoplasm. The catalysed reaction is (R)-pantothenate + ATP = (R)-4'-phosphopantothenate + ADP + H(+). The protein operates within cofactor biosynthesis; coenzyme A biosynthesis; CoA from (R)-pantothenate: step 1/5. Catalyzes the phosphorylation of pantothenate (Pan), the first step in CoA biosynthesis. The polypeptide is Type III pantothenate kinase (Campylobacter jejuni subsp. jejuni serotype O:2 (strain ATCC 700819 / NCTC 11168)).